The primary structure comprises 695 residues: RING finger protein 145 (695 aa).

13 consecutive transmembrane segments (helical) span residues 53–73, 77–97, 123–143, 146–166, 168–188, 225–245, 275–295, 316–336, 340–360, 384–404, 410–430, 460–480, and 482–502; these read YLAL…LTLP, LAKL…HQIS, FITA…VMKT, IWLF…IPIE, IVVI…YFLA, LVVP…QIYT, YSLL…LTLC, TEGV…LQVV, FLLS…MLEI, SLCL…CQFF, LLII…TLFV, LLEF…TVFG, and WTVM…WLRA. The RING-type; atypical zinc-finger motif lies at 537-575; the sequence is CSICYQDMNSAVITPCSHFFHPGCLKKWLYVQETCPLCH. A compositionally biased stretch (polar residues) spans 589-604; it reads SGSSTNPVVEQSANNP. The disordered stretch occupies residues 589–608; it reads SGSSTNPVVEQSANNPPQEP.

It localises to the membrane. This chain is RING finger protein 145 (rnf145), found in Xenopus laevis (African clawed frog).